The chain runs to 488 residues: Probable malate:quinone oxidoreductase (488 aa).

It belongs to the MQO family. It depends on FAD as a cofactor.

It catalyses the reaction (S)-malate + a quinone = a quinol + oxaloacetate. It functions in the pathway carbohydrate metabolism; tricarboxylic acid cycle; oxaloacetate from (S)-malate (quinone route): step 1/1. This chain is Probable malate:quinone oxidoreductase, found in Neisseria meningitidis serogroup B (strain ATCC BAA-335 / MC58).